The sequence spans 440 residues: Argininosuccinate lyase (440 aa).

Belongs to the lyase 1 family. Argininosuccinate lyase subfamily.

Its subcellular location is the cytoplasm. It catalyses the reaction 2-(N(omega)-L-arginino)succinate = fumarate + L-arginine. It participates in amino-acid biosynthesis; L-arginine biosynthesis; L-arginine from L-ornithine and carbamoyl phosphate: step 3/3. This chain is Argininosuccinate lyase, found in Clostridium botulinum (strain Loch Maree / Type A3).